We begin with the raw amino-acid sequence, 695 residues long: Follicle-stimulating hormone receptor (695 aa).

The signal sequence occupies residues 1 to 17 (MTFLLVSLLAFLSLGSG). 2 cysteine pairs are disulfide-bonded: C18/C25 and C23/C32. Residues 18-46 (CHHRICHCWHRVFLCQESKVTEIPSDLPR) form the LRRNT domain. At 18–366 (CHHRICHCWH…EDIMGYDILR (349 aa)) the chain is on the extracellular side. LRR repeat units follow at residues 49 to 72 (VELR…FGDL), 73 to 97 (EKIE…LSKL), 98 to 118 (HEIR…AFQN), 119 to 143 (LPNL…KIQS), 144 to 169 (LQKV…MGLS), 170 to 192 (FESM…AFNG), 193 to 216 (TQLD…VFQG), 217 to 240 (ASGP…GLEN), and 241 to 259 (IKKL…PSLD). N-linked (GlcNAc...) asparagine glycosylation is present at N93. N191 and N199 each carry an N-linked (GlcNAc...) asparagine glycan. 4 disulfide bridges follow: C275–C346, C276–C292, C276–C356, and C292–C338. N293 carries N-linked (GlcNAc...) asparagine glycosylation. Residue Y335 is modified to Sulfotyrosine. Residues 367 to 387 (VLIWFISILAITGNIIVLMIL) form a helical membrane-spanning segment. Topologically, residues 388–398 (ITSQYKLTVPR) are cytoplasmic. Residues 399 to 419 (FLMCNLAFADLCIGIYLLLIA) form a helical membrane-spanning segment. Over 420–444 (SVDIYTKSQYHNYAIDWQTGAGCDA) the chain is Extracellular. A helical transmembrane segment spans residues 445–465 (AGFFTVFASELSVYTLTVITL). Residues 466 to 487 (ERWHTITHAMQLECKVQLRHAA) are Cytoplasmic-facing. Residues 488 to 508 (IIMLLGWIFAFMVALFPIFGI) traverse the membrane as a helical segment. The Extracellular segment spans residues 509-528 (SSYMKVSICLPMDIDSPLSQ). The chain crosses the membrane as a helical span at residues 529-550 (LYVMSLLVLNVLAFVVICCCYA). Residues 551-573 (HIYLTVRNPNIVSSSSDTKIAKR) are Cytoplasmic-facing. The helical transmembrane segment at 574–594 (MAMLIFTDFLCMAPISFFAIS) threads the bilayer. At 595–608 (ASLKVPLITVSKSK) the chain is on the extracellular side. The chain crosses the membrane as a helical span at residues 609–629 (ILLVLFYPINSCANPFLYAIF). The Cytoplasmic segment spans residues 630 to 695 (TKNFRRDFFI…LIPLRHLAKN (66 aa)).

The protein belongs to the G-protein coupled receptor 1 family. FSH/LSH/TSH subfamily. Homotrimer. Functions as a homotrimer binding the FSH hormone heterodimer composed of CGA and FSHB. Interacts with ARRB2. Interacts with APPL2; interaction is independent of follicle stimulating hormone stimulation. Post-translationally, N-glycosylated; indirectly required for FSH-binding, possibly via a conformational change that allows high affinity binding of hormone. In terms of processing, sulfated.

It localises to the cell membrane. G protein-coupled receptor for follitropin, the follicle-stimulating hormone. Through cAMP production activates the downstream PI3K-AKT and ERK1/ERK2 signaling pathways. This chain is Follicle-stimulating hormone receptor (FSHR), found in Felis catus (Cat).